The primary structure comprises 485 residues: MTDIINKLQAFADANPQSIAVRHTTDELTYQQLMDESSKLAHRLQGSKKPMILFGHMSPYMIVGMIGAIKAGCGYVPVDTSIPEDRIKMIINKVQPEFVFNTTDESFESLEGEVFTIEDIKTSQDPVIFDSQIKDNDTVYTIFTSGSTGEPKGVQIEYASLVQFTEWMLELNKSGNEQQWLNQAPFSFDLSVMAIYPCLASGGTLNLVDKNMINKPKLLNEMLTSIPINIWVSTPSFMEMCLLLPTLNEEQYGSLNEFFFCGEILPHRAAKALVSRFPSATIYNTYGPTEATVAVTSIQITQEILDQYPTLPVGVERPGARLSTTDEGELVIEGQSVSLGYLKNDQKTAEVFNFDDGIRTYHTGDKAKFENGQWFIQGRIDFQIKLNGYRMELEEIETQLRQSEFVKEAIVVPVYKNDKVIHLIGAIVPTTEVTDNAEMTKNIKNDLKSRLPEYMIPRKFEWMEQLPLTSNGKIDRKKIAEVING.

144–145 (TS) lines the ATP pocket. Aspartate 189 provides a ligand contact to D-alanine. 284–289 (NTYGPT) contributes to the ATP binding site. Valine 293 contacts D-alanine. ATP-binding residues include aspartate 365 and lysine 473. Lysine 473 contributes to the D-alanine binding site.

This sequence belongs to the ATP-dependent AMP-binding enzyme family. DltA subfamily.

Its subcellular location is the cytoplasm. It carries out the reaction holo-[D-alanyl-carrier protein] + D-alanine + ATP = D-alanyl-[D-alanyl-carrier protein] + AMP + diphosphate. It participates in cell wall biogenesis; lipoteichoic acid biosynthesis. Its function is as follows. Catalyzes the first step in the D-alanylation of lipoteichoic acid (LTA), the activation of D-alanine and its transfer onto the D-alanyl carrier protein (Dcp) DltC. In an ATP-dependent two-step reaction, forms a high energy D-alanyl-AMP intermediate, followed by transfer of the D-alanyl residue as a thiol ester to the phosphopantheinyl prosthetic group of the Dcp. D-alanylation of LTA plays an important role in modulating the properties of the cell wall in Gram-positive bacteria, influencing the net charge of the cell wall. The chain is D-alanine--D-alanyl carrier protein ligase from Staphylococcus aureus (strain bovine RF122 / ET3-1).